The chain runs to 306 residues: tRNA pseudouridine synthase B (306 aa).

Asp48 (nucleophile) is an active-site residue.

The protein belongs to the pseudouridine synthase TruB family. Type 1 subfamily.

The catalysed reaction is uridine(55) in tRNA = pseudouridine(55) in tRNA. Functionally, responsible for synthesis of pseudouridine from uracil-55 in the psi GC loop of transfer RNAs. This Chromobacterium violaceum (strain ATCC 12472 / DSM 30191 / JCM 1249 / CCUG 213 / NBRC 12614 / NCIMB 9131 / NCTC 9757 / MK) protein is tRNA pseudouridine synthase B.